Reading from the N-terminus, the 579-residue chain is Solute carrier family 15 member 5 (579 aa).

11 consecutive transmembrane segments (helical) span residues 77-97, 110-130, 154-174, 191-211, 221-241, 304-324, 343-363, 386-406, 422-442, 472-492, and 509-529; these read CQAA…PVFV, LVYI…VVAF, LFYV…AIVC, SFFN…FLGI, ALVL…LHMI, TFFL…MCIM, GFLL…LILA, CIIA…FFEI, VLTV…LLGV, TLFN…VYLI, and SFFF…CSVS.

It belongs to the major facilitator superfamily. Proton-dependent oligopeptide transporter (POT/PTR) (TC 2.A.17) family.

The protein resides in the membrane. Its function is as follows. Proton oligopeptide cotransporter. The protein is Solute carrier family 15 member 5 (SLC15A5) of Homo sapiens (Human).